The following is a 72-amino-acid chain: UPF0270 protein YheU (72 aa).

The protein belongs to the UPF0270 family.

The protein is UPF0270 protein YheU of Salmonella arizonae (strain ATCC BAA-731 / CDC346-86 / RSK2980).